Consider the following 183-residue polypeptide: Small ribosomal subunit protein uS4c (183 aa).

Positions 82–143 (MRLDNILFRL…KQRSKALIQN (62 aa)) constitute an S4 RNA-binding domain.

Belongs to the universal ribosomal protein uS4 family. In terms of assembly, part of the 30S ribosomal subunit. Contacts protein S5. The interaction surface between S4 and S5 is involved in control of translational fidelity.

Its subcellular location is the plastid. It is found in the chloroplast. One of the primary rRNA binding proteins, it binds directly to 16S rRNA where it nucleates assembly of the body of the 30S subunit. Functionally, with S5 and S12 plays an important role in translational accuracy. This is Small ribosomal subunit protein uS4c (rps4) from Sparaxis sp. (strain Lejeune 1997).